The following is a 265-amino-acid chain: C-type lectin domain family 12 member A (265 aa).

The Cytoplasmic segment spans residues 1-43; the sequence is MSEEVTYADLQFQNSSEMEKIPEIGKFGEKAPPAPSHVWRPAA. The ITIM motif signature appears at 5–10; that stretch reads VTYADL. Tyr7 is modified (phosphotyrosine). The helical; Signal-anchor for type II membrane protein transmembrane segment at 44 to 64 threads the bilayer; that stretch reads LFLTLLCLLLLIGLGVLASMF. Residues 65–265 are Extracellular-facing; it reads HVTLKIEMKK…QLGSTYFREA (201 aa). 2 N-linked (GlcNAc...) asparagine glycosylation sites follow: Asn88 and Asn98. Cystine bridges form between Cys118/Cys130, Cys133/Cys144, Cys161/Cys248, and Cys227/Cys240. The 110-residue stretch at 140–249 folds into the C-type lectin domain; it reads HKDSCYFLSD…CTYKKRMICE (110 aa). A glycan (N-linked (GlcNAc...) asparagine) is linked at Asn165.

As to quaternary structure, homodimer; disulfide-linked. Interacts (when the ITIM motif is phosphorylated) with PTPN6 and PTPN11. Post-translationally, phosphorylated at Tyr-7 by SRC in the ITIM motif following ligand-binding, promoting recruitment of tyrosine-protein phosphatases PTPN6 and PTPN11. In terms of processing, highly N-glycosylated; glycosylation varies between cell types. As to expression, preferentially expressed in lymphoid tissues and immune cells, including natural killer (NK) cells, T-cells, dendritic cells and monocytes or macrophages. Detected in spleen macrophage-rich red pulp and in lymph node (at protein level). Detected in peripheral blood leukocytes, dendritic cells, bone marrow, monocytes, mononuclear leukocytes and macrophages.

It is found in the cell membrane. Myeloid inhibitory C-type lectin receptor that acts as a negative regulator of myeloid cell activation. Myeloid cell inhibition is required to limit proinflammatory pathways and protect against excessive inflammation. Specifically recognizes and binds various structures, such as neutrophil extracellular traps (NETs) or monosodium urate crystals. Also acts as a pattern-recognition receptor for pathogen-associated molecules, such as plasmodium hemozoin or mycobacterial micolic acid. Ligand-binding induces phosphorylation of its ITIM motif, followed by recruitment of tyrosine-protein phosphatases PTPN6 and PTPN11, which counteract tyrosine-protein kinase SYK, thereby preventing myeloid cell activation. Acts as a pattern-recognition receptor for NETs in neutrophils: specifically recognizes DNA in NETs, leading to inhibit neutrophil activation and limit further NET formation. This regulation is essential for controlling key neutrophil responses and limit NET-mediated inflammatory conditions. Also recognizes dead cells by acting as a receptor for monosodium urate crystals, leading to down-regulate neutrophil activation. Binding to monosodium urate crystals also promotes the type I interferon response. Acts as an inhibitor of natural killer (NK) cell cytotoxicity. Also acts as an ihibitor of dendritic cell maturation in an IL10-dependent manner. In Homo sapiens (Human), this protein is C-type lectin domain family 12 member A.